Here is a 225-residue protein sequence, read N- to C-terminus: LysM and putative peptidoglycan-binding domain-containing protein 1 (225 aa).

A phosphoserine mark is found at Ser-23 and Ser-33. The region spanning 40 to 84 is the LysM domain; sequence LEHQLAPGDTLAGLALKYGVTMEQIKRANRLYTNDSIFLKKTLHI. The tract at residues 97 to 153 is disordered; it reads LDSEEEKDGEEAVQPSKDEVRPHSAERKKRERGLGHANGEPLPTAGQEPARHDLSAS. Positions 98–107 are enriched in acidic residues; that stretch reads DSEEEKDGEE. Phosphoserine is present on Ser-99. The span at 112 to 121 shows a compositional bias: basic and acidic residues; that stretch reads SKDEVRPHSA. A phosphoserine mark is found at Ser-164, Ser-179, Ser-192, and Ser-210. Residues 170 to 225 are disordered; the sequence is AAQKLKKGESGIPGEDSSLHLSSPRMQQRAVLGPVPLTQTSRTRTLRDQEDEIFKL. Positions 214–225 are enriched in basic and acidic residues; sequence TLRDQEDEIFKL.

In Bos taurus (Bovine), this protein is LysM and putative peptidoglycan-binding domain-containing protein 1 (LYSMD1).